Consider the following 196-residue polypeptide: GTP cyclohydrolase 1 (196 aa).

The Zn(2+) site is built by Cys85, His88, and Cys156.

The protein belongs to the GTP cyclohydrolase I family. In terms of assembly, toroid-shaped homodecamer, composed of two pentamers of five dimers.

It catalyses the reaction GTP + H2O = 7,8-dihydroneopterin 3'-triphosphate + formate + H(+). Its pathway is cofactor biosynthesis; 7,8-dihydroneopterin triphosphate biosynthesis; 7,8-dihydroneopterin triphosphate from GTP: step 1/1. The protein is GTP cyclohydrolase 1 of Bacteroides thetaiotaomicron (strain ATCC 29148 / DSM 2079 / JCM 5827 / CCUG 10774 / NCTC 10582 / VPI-5482 / E50).